Consider the following 301-residue polypeptide: Tyrosine recombinase XerD (301 aa).

The region spanning glutamine 7–lysine 90 is the Core-binding (CB) domain. The 186-residue stretch at arginine 109–leucine 294 folds into the Tyr recombinase domain. Active-site residues include arginine 153, lysine 175, histidine 246, arginine 249, and histidine 272. Residue tyrosine 281 is the O-(3'-phospho-DNA)-tyrosine intermediate of the active site.

The protein belongs to the 'phage' integrase family. XerD subfamily. Forms a cyclic heterotetrameric complex composed of two molecules of XerC and two molecules of XerD.

Its subcellular location is the cytoplasm. In terms of biological role, site-specific tyrosine recombinase, which acts by catalyzing the cutting and rejoining of the recombining DNA molecules. The XerC-XerD complex is essential to convert dimers of the bacterial chromosome into monomers to permit their segregation at cell division. It also contributes to the segregational stability of plasmids. The protein is Tyrosine recombinase XerD of Chlamydia pneumoniae (Chlamydophila pneumoniae).